A 410-amino-acid chain; its full sequence is D-amino acid dehydrogenase (410 aa).

Residue 9 to 14 (GGGIVG) participates in FAD binding.

The protein belongs to the DadA oxidoreductase family. It depends on FAD as a cofactor.

Its subcellular location is the cell inner membrane. The catalysed reaction is a D-alpha-amino acid + a quinone + H2O = a 2-oxocarboxylate + a quinol + NH4(+). Functionally, catalyzes the oxidative deamination of D-amino acids. Has broad substrate specificity; is mostly active on D-proline, and to a lesser extent, on several other D-amino acids such as D-alanine, D-phenylalanine and D-serine. Mediates electron transport from D-proline to coenzyme Q1 in vitro, and is involved in the electron transport chain from D-proline to the c-type cytochrome in vivo. This chain is D-amino acid dehydrogenase, found in Helicobacter pylori (strain ATCC 700392 / 26695) (Campylobacter pylori).